The chain runs to 357 residues: Ribosomal RNA large subunit methyltransferase M (357 aa).

Residues Ser-183, 216–219 (APGG), Asp-235, Asp-255, and Asp-271 contribute to the S-adenosyl-L-methionine site. The active-site Proton acceptor is Lys-300.

The protein belongs to the class I-like SAM-binding methyltransferase superfamily. RNA methyltransferase RlmE family. RlmM subfamily. In terms of assembly, monomer.

It localises to the cytoplasm. The enzyme catalyses cytidine(2498) in 23S rRNA + S-adenosyl-L-methionine = 2'-O-methylcytidine(2498) in 23S rRNA + S-adenosyl-L-homocysteine + H(+). Functionally, catalyzes the 2'-O-methylation at nucleotide C2498 in 23S rRNA. The sequence is that of Ribosomal RNA large subunit methyltransferase M from Pseudomonas syringae pv. syringae (strain B728a).